The sequence spans 336 residues: Foldase protein PrsA (336 aa).

Positions 1 to 22 (MKSAKKLLSVLCLGIFILTFTA) are cleaved as a signal peptide. The N-palmitoyl cysteine moiety is linked to residue Cys23. Cys23 is lipidated: S-diacylglycerol cysteine. Residues 194 to 286 (PNTMNVSHIL…FGYHIIKINS (93 aa)) enclose the PpiC domain.

It belongs to the PrsA family.

The protein localises to the cell membrane. The enzyme catalyses [protein]-peptidylproline (omega=180) = [protein]-peptidylproline (omega=0). Its function is as follows. Plays a major role in protein secretion by helping the post-translocational extracellular folding of several secreted proteins. The sequence is that of Foldase protein PrsA from Clostridium botulinum (strain 657 / Type Ba4).